The sequence spans 265 residues: Cell division protein FtsQ (265 aa).

A compositionally biased stretch (low complexity) spans 1–13; sequence MAGATTAKGGARR. A disordered region spans residues 1–25; the sequence is MAGATTAKGGARRTPPPGPPPPALK. Residues 1–35 lie on the Cytoplasmic side of the membrane; it reads MAGATTAKGGARRTPPPGPPPPALKARRRLRLPRR. Positions 14 to 23 are enriched in pro residues; the sequence is TPPPGPPPPA. Residues 36–58 traverse the membrane as a helical segment; the sequence is RTLLVTGVATALLGSGVTWLLYG. The Extracellular segment spans residues 59–265; that stretch reads SSWLRVEQVA…APTAPAVTHS (207 aa). The POTRA domain occupies 62–131; the sequence is LRVEQVAVSG…DTIAVRVTER (70 aa).

This sequence belongs to the FtsQ/DivIB family. FtsQ subfamily.

The protein localises to the cell membrane. In terms of biological role, essential cell division protein. This is Cell division protein FtsQ from Streptomyces bingchenggensis (strain BCW-1).